A 382-amino-acid chain; its full sequence is uncharacterized protein (382 aa).

Transmembrane regions (helical) follow at residues 14-34, 45-65, 79-99, 102-122, 131-151, 157-177, 204-224, 235-255, 270-290, 291-311, 325-345, and 348-368; these read GLLL…LWLA, VVSS…GYVI, FIFA…SWLA, FVAG…LMCS, LLAA…LLVS, LMSV…PLLF, LGVN…GLMP, ASIG…QWPI, VQVF…AMAP, ALFI…AWAC, ALLL…AMLM, and FSDN…LLML.

Belongs to the major facilitator superfamily. YcaD (TC 2.A.1.26) family.

Its subcellular location is the cell inner membrane. This is an uncharacterized protein from Escherichia coli (strain K12 / MC4100 / BW2952).